The chain runs to 190 residues: 6,7-dimethyl-8-ribityllumazine synthase (190 aa).

5-amino-6-(D-ribitylamino)uracil-binding positions include Phe-23, 61–63 (SFE), and 85–87 (AVI). 90–91 (QT) serves as a coordination point for (2S)-2-hydroxy-3-oxobutyl phosphate. His-93 (proton donor) is an active-site residue. Residue Phe-118 coordinates 5-amino-6-(D-ribitylamino)uracil. Position 132 (Arg-132) interacts with (2S)-2-hydroxy-3-oxobutyl phosphate.

It belongs to the DMRL synthase family.

It catalyses the reaction (2S)-2-hydroxy-3-oxobutyl phosphate + 5-amino-6-(D-ribitylamino)uracil = 6,7-dimethyl-8-(1-D-ribityl)lumazine + phosphate + 2 H2O + H(+). The protein operates within cofactor biosynthesis; riboflavin biosynthesis; riboflavin from 2-hydroxy-3-oxobutyl phosphate and 5-amino-6-(D-ribitylamino)uracil: step 1/2. Its function is as follows. Catalyzes the formation of 6,7-dimethyl-8-ribityllumazine by condensation of 5-amino-6-(D-ribitylamino)uracil with 3,4-dihydroxy-2-butanone 4-phosphate. This is the penultimate step in the biosynthesis of riboflavin. This Trichormus variabilis (strain ATCC 29413 / PCC 7937) (Anabaena variabilis) protein is 6,7-dimethyl-8-ribityllumazine synthase.